Here is a 402-residue protein sequence, read N- to C-terminus: 4-hydroxy-3-methylbut-2-enyl diphosphate reductase (402 aa).

Cys66 is a [4Fe-4S] cluster binding site. (2E)-4-hydroxy-3-methylbut-2-enyl diphosphate is bound at residue His96. His96 contributes to the dimethylallyl diphosphate binding site. His96 lines the isopentenyl diphosphate pocket. Position 157 (Cys157) interacts with [4Fe-4S] cluster. His185 provides a ligand contact to (2E)-4-hydroxy-3-methylbut-2-enyl diphosphate. Residue His185 coordinates dimethylallyl diphosphate. His185 lines the isopentenyl diphosphate pocket. Residue Glu187 is the Proton donor of the active site. A (2E)-4-hydroxy-3-methylbut-2-enyl diphosphate-binding site is contributed by Thr250. Cys288 is a [4Fe-4S] cluster binding site. (2E)-4-hydroxy-3-methylbut-2-enyl diphosphate contacts are provided by Ser317, Ser318, Asn319, and Ser379. Dimethylallyl diphosphate-binding residues include Ser317, Ser318, Asn319, and Ser379. Residues Ser317, Ser318, Asn319, and Ser379 each coordinate isopentenyl diphosphate.

It belongs to the IspH family. The cofactor is [4Fe-4S] cluster.

The enzyme catalyses isopentenyl diphosphate + 2 oxidized [2Fe-2S]-[ferredoxin] + H2O = (2E)-4-hydroxy-3-methylbut-2-enyl diphosphate + 2 reduced [2Fe-2S]-[ferredoxin] + 2 H(+). It catalyses the reaction dimethylallyl diphosphate + 2 oxidized [2Fe-2S]-[ferredoxin] + H2O = (2E)-4-hydroxy-3-methylbut-2-enyl diphosphate + 2 reduced [2Fe-2S]-[ferredoxin] + 2 H(+). It functions in the pathway isoprenoid biosynthesis; dimethylallyl diphosphate biosynthesis; dimethylallyl diphosphate from (2E)-4-hydroxy-3-methylbutenyl diphosphate: step 1/1. Its pathway is isoprenoid biosynthesis; isopentenyl diphosphate biosynthesis via DXP pathway; isopentenyl diphosphate from 1-deoxy-D-xylulose 5-phosphate: step 6/6. Functionally, catalyzes the conversion of 1-hydroxy-2-methyl-2-(E)-butenyl 4-diphosphate (HMBPP) into a mixture of isopentenyl diphosphate (IPP) and dimethylallyl diphosphate (DMAPP). Acts in the terminal step of the DOXP/MEP pathway for isoprenoid precursor biosynthesis. The protein is 4-hydroxy-3-methylbut-2-enyl diphosphate reductase of Nostoc sp. (strain PCC 7120 / SAG 25.82 / UTEX 2576).